Reading from the N-terminus, the 201-residue chain is Small ribosomal subunit protein uS4c (201 aa).

A disordered region spans residues 14-43; the sequence is RLGALPGLTSKRPRAGSDLRNQSRPGKKSQ. The 81-residue stretch at 89-169 folds into the S4 RNA-binding domain; that stretch reads MRLDNILFRL…LPKHLTFHTL (81 aa).

Belongs to the universal ribosomal protein uS4 family. In terms of assembly, part of the 30S ribosomal subunit. Contacts protein S5. The interaction surface between S4 and S5 is involved in control of translational fidelity.

The protein resides in the plastid. Its subcellular location is the chloroplast. One of the primary rRNA binding proteins, it binds directly to 16S rRNA where it nucleates assembly of the body of the 30S subunit. Functionally, with S5 and S12 plays an important role in translational accuracy. This is Small ribosomal subunit protein uS4c (rps4) from Gossypium hirsutum (Upland cotton).